We begin with the raw amino-acid sequence, 69 residues long: Putative defensin-like protein 312 (69 aa).

The signal sequence occupies residues 1–19 (MSCFSFLVYFLLFIVTKMS). The cysteines at positions 45 and 57 are disulfide-linked.

Belongs to the DEFL family.

The protein resides in the secreted. This is Putative defensin-like protein 312 from Arabidopsis thaliana (Mouse-ear cress).